Reading from the N-terminus, the 277-residue chain is MSWDDEDFAVPSGSKEKPVLNSWDDEFAENDDEPVLESWEDEETAKPKPKAAAAAAAKAPKKASPSPAATPAATKNTMLDIDTLDDKTRKELLRKAELESDLNNAADLFGGLGVAEEHPRARAEREREQLAAVAQPAALTKDTPIQSHPLFSDLETKKDYQELRKALATAITSTSNKSLLNYSGGLAIDLIRDISKPMTVENIRQTIATLNVLMKDKEREERQARLAKVKGGTATGGAGKKKAKATRANLGGAFKKDNDFDLGGNDNFDDFGEDDFM.

The tract at residues 1-80 is disordered; it reads MSWDDEDFAV…PAATKNTMLD (80 aa). Residues 23–43 are compositionally biased toward acidic residues; it reads WDDEFAENDDEPVLESWEDEE. Over residues 50–75 the composition is skewed to low complexity; the sequence is KAAAAAAAKAPKKASPSPAATPAATK. The stretch at 199–230 forms a coiled coil; that stretch reads TVENIRQTIATLNVLMKDKEREERQARLAKVK. The tract at residues 257 to 277 is disordered; the sequence is DNDFDLGGNDNFDDFGEDDFM. Residues 267–277 are compositionally biased toward acidic residues; it reads NFDDFGEDDFM.

This sequence belongs to the eIF-3 subunit J family. As to quaternary structure, component of the eukaryotic translation initiation factor 3 (eIF-3) complex.

Its subcellular location is the cytoplasm. Component of the eukaryotic translation initiation factor 3 (eIF-3) complex, which is involved in protein synthesis of a specialized repertoire of mRNAs and, together with other initiation factors, stimulates binding of mRNA and methionyl-tRNAi to the 40S ribosome. The eIF-3 complex specifically targets and initiates translation of a subset of mRNAs involved in cell proliferation. This Kluyveromyces lactis (strain ATCC 8585 / CBS 2359 / DSM 70799 / NBRC 1267 / NRRL Y-1140 / WM37) (Yeast) protein is Eukaryotic translation initiation factor 3 subunit J.